A 264-amino-acid chain; its full sequence is 3-methyl-2-oxobutanoate hydroxymethyltransferase (264 aa).

The Mg(2+) site is built by Asp45 and Asp84. Residues 45–46, Asp84, and Lys112 contribute to the 3-methyl-2-oxobutanoate site; that span reads DS. Glu114 provides a ligand contact to Mg(2+). Glu181 functions as the Proton acceptor in the catalytic mechanism.

It belongs to the PanB family. In terms of assembly, homodecamer; pentamer of dimers. The cofactor is Mg(2+).

It is found in the cytoplasm. It carries out the reaction 3-methyl-2-oxobutanoate + (6R)-5,10-methylene-5,6,7,8-tetrahydrofolate + H2O = 2-dehydropantoate + (6S)-5,6,7,8-tetrahydrofolate. It functions in the pathway cofactor biosynthesis; (R)-pantothenate biosynthesis; (R)-pantoate from 3-methyl-2-oxobutanoate: step 1/2. In terms of biological role, catalyzes the reversible reaction in which hydroxymethyl group from 5,10-methylenetetrahydrofolate is transferred onto alpha-ketoisovalerate to form ketopantoate. The protein is 3-methyl-2-oxobutanoate hydroxymethyltransferase of Shewanella sediminis (strain HAW-EB3).